Consider the following 360-residue polypeptide: Histidinol-phosphate aminotransferase (360 aa).

Residue Lys-221 is modified to N6-(pyridoxal phosphate)lysine.

It belongs to the class-II pyridoxal-phosphate-dependent aminotransferase family. Histidinol-phosphate aminotransferase subfamily. As to quaternary structure, homodimer. Pyridoxal 5'-phosphate is required as a cofactor.

It catalyses the reaction L-histidinol phosphate + 2-oxoglutarate = 3-(imidazol-4-yl)-2-oxopropyl phosphate + L-glutamate. Its pathway is amino-acid biosynthesis; L-histidine biosynthesis; L-histidine from 5-phospho-alpha-D-ribose 1-diphosphate: step 7/9. This chain is Histidinol-phosphate aminotransferase, found in Desulfitobacterium hafniense (strain Y51).